The sequence spans 723 residues: Enolase-phosphatase E1 (723 aa).

Substrate-binding positions include 126–127 and Lys-160; that span reads SS. Residues 239 to 723 are disordered; that stretch reads GAGAKRKIDE…TPTPPIEAES (485 aa). 2 stretches are compositionally biased toward basic and acidic residues: residues 262–284 and 293–308; these read VKKD…DEPA and AAKE…KMEV. Residues 311-320 show a composition bias toward low complexity; sequence AAAAAAPPAD. Composition is skewed to basic and acidic residues over residues 322–406, 419–443, 468–479, 487–496, 511–565, and 577–593; these read AEEK…VVEE, AEEK…KPAE, EPAKEKPAEAEA, TKAEVVEKPA, SADK…KGEE, and VEAK…KSDA. Composition is skewed to low complexity over residues 596–606 and 636–647; these read VSTTTTTTSTE and NGEAEPAAEAVV. The segment covering 653-666 has biased composition (basic and acidic residues); it reads GKHEEKGDSDKEND.

This sequence belongs to the HAD-like hydrolase superfamily. MasA/MtnC family. Monomer.

Its subcellular location is the cytoplasm. The protein resides in the nucleus. The catalysed reaction is 5-methylsulfanyl-2,3-dioxopentyl phosphate + H2O = 1,2-dihydroxy-5-(methylsulfanyl)pent-1-en-3-one + phosphate. Its pathway is amino-acid biosynthesis; L-methionine biosynthesis via salvage pathway; L-methionine from S-methyl-5-thio-alpha-D-ribose 1-phosphate: step 3/6. It functions in the pathway amino-acid biosynthesis; L-methionine biosynthesis via salvage pathway; L-methionine from S-methyl-5-thio-alpha-D-ribose 1-phosphate: step 4/6. Bifunctional enzyme that catalyzes the enolization of 2,3-diketo-5-methylthiopentyl-1-phosphate (DK-MTP-1-P) into the intermediate 2-hydroxy-3-keto-5-methylthiopentenyl-1-phosphate (HK-MTPenyl-1-P), which is then dephosphorylated to form the acireductone 1,2-dihydroxy-3-keto-5-methylthiopentene (DHK-MTPene). This Culex quinquefasciatus (Southern house mosquito) protein is Enolase-phosphatase E1.